Consider the following 376-residue polypeptide: tRNA-specific 2-thiouridylase MnmA (376 aa).

ATP contacts are provided by residues 16 to 23 (AMSGGVDS) and Leu-42. Cys-111 functions as the Nucleophile in the catalytic mechanism. The cysteines at positions 111 and 210 are disulfide-linked. Gly-135 contacts ATP. Positions 158–160 (KDQ) are interaction with tRNA. Cys-210 functions as the Cysteine persulfide intermediate in the catalytic mechanism.

It belongs to the MnmA/TRMU family.

It localises to the cytoplasm. The catalysed reaction is S-sulfanyl-L-cysteinyl-[protein] + uridine(34) in tRNA + AH2 + ATP = 2-thiouridine(34) in tRNA + L-cysteinyl-[protein] + A + AMP + diphosphate + H(+). Its function is as follows. Catalyzes the 2-thiolation of uridine at the wobble position (U34) of tRNA, leading to the formation of s(2)U34. The chain is tRNA-specific 2-thiouridylase MnmA from Streptomyces coelicolor (strain ATCC BAA-471 / A3(2) / M145).